Consider the following 128-residue polypeptide: DNA-directed RNA polymerase subunit omega (128 aa).

Residues 87–106 (ARSSQAAPKSAPGQEIGKSF) form a disordered region.

Belongs to the RNA polymerase subunit omega family. In terms of assembly, the RNAP catalytic core consists of 2 alpha, 1 beta, 1 beta' and 1 omega subunit. When a sigma factor is associated with the core the holoenzyme is formed, which can initiate transcription.

It carries out the reaction RNA(n) + a ribonucleoside 5'-triphosphate = RNA(n+1) + diphosphate. Promotes RNA polymerase assembly. Latches the N- and C-terminal regions of the beta' subunit thereby facilitating its interaction with the beta and alpha subunits. The sequence is that of DNA-directed RNA polymerase subunit omega from Anaplasma marginale (strain Florida).